The chain runs to 205 residues: Outer-membrane lipoprotein carrier protein (205 aa).

The first 19 residues, 1–19 (MKKIIICFIFVFSINISFA), serve as a signal peptide directing secretion.

This sequence belongs to the LolA family. As to quaternary structure, monomer.

Its subcellular location is the periplasm. In terms of biological role, participates in the translocation of lipoproteins from the inner membrane to the outer membrane. Only forms a complex with a lipoprotein if the residue after the N-terminal Cys is not an aspartate (The Asp acts as a targeting signal to indicate that the lipoprotein should stay in the inner membrane). The chain is Outer-membrane lipoprotein carrier protein from Francisella tularensis subsp. novicida (strain U112).